Reading from the N-terminus, the 202-residue chain is Superoxide dismutase [Mn] (202 aa).

His27 is a binding site for Mn(2+). Phosphothreonine occurs at positions 34 and 70. Positions 82, 164, and 168 each coordinate Mn(2+).

Belongs to the iron/manganese superoxide dismutase family. In terms of assembly, homodimer; under aerobic conditions. Under anaerobic conditions it is a component of the so-called 'green protein' complex (GPC), which consists of at least two components, SodA and a nucleoside diphosphate kinase (NDK). The cofactor is Mn(2+).

Its subcellular location is the cytoplasm. The enzyme catalyses 2 superoxide + 2 H(+) = H2O2 + O2. In terms of biological role, destroys superoxide anion radicals which are normally produced within the cells and which are toxic to biological systems. Active only in homodimeric state. The protein is Superoxide dismutase [Mn] (sodA) of Virgibacillus halodenitrificans (Bacillus halodenitrificans).